A 177-amino-acid chain; its full sequence is Alkyl hydroperoxide reductase AhpD (177 aa).

Cys-130 (proton donor) is an active-site residue. A disulfide bond links Cys-130 and Cys-133. The Cysteine sulfenic acid (-SOH) intermediate role is filled by Cys-133.

It belongs to the AhpD family. Homotrimer.

The catalysed reaction is N(6)-[(R)-dihydrolipoyl]-L-lysyl-[lipoyl-carrier protein] + a hydroperoxide = N(6)-[(R)-lipoyl]-L-lysyl-[lipoyl-carrier protein] + an alcohol + H2O. Its function is as follows. Antioxidant protein with alkyl hydroperoxidase activity. Required for the reduction of the AhpC active site cysteine residues and for the regeneration of the AhpC enzyme activity. In Mycolicibacterium smegmatis (strain ATCC 700084 / mc(2)155) (Mycobacterium smegmatis), this protein is Alkyl hydroperoxide reductase AhpD.